Reading from the N-terminus, the 862-residue chain is Eukaryotic translation initiation factor 3 subunit C (862 aa).

Residues 1–10 (MSRFFYGGGS) are compositionally biased toward gly residues. The tract at residues 1–81 (MSRFFYGGGS…DEEKTTVVKS (81 aa)) is disordered. The segment covering 16–52 (SSDEEELYERDEEEQSEEEESSEEEETSEEGSDDEEG) has biased composition (acidic residues). The 175-residue stretch at 601 to 775 (FHMHINLELL…GAIVFRKGVE (175 aa)) folds into the PCI domain. Residues 814-862 (RDQGAGARGGRGGGRGGHARGGARFPGQQGRRPGGQQFGGGALGGAIKA) are disordered. Positions 819-833 (GARGGRGGGRGGHAR) are enriched in gly residues. Residues 835-844 (GARFPGQQGR) are compositionally biased toward low complexity. The segment covering 845–862 (RPGGQQFGGGALGGAIKA) has biased composition (gly residues).

The protein belongs to the eIF-3 subunit C family. In terms of assembly, component of the eukaryotic translation initiation factor 3 (eIF-3) complex.

It is found in the cytoplasm. Functionally, component of the eukaryotic translation initiation factor 3 (eIF-3) complex, which is involved in protein synthesis of a specialized repertoire of mRNAs and, together with other initiation factors, stimulates binding of mRNA and methionyl-tRNAi to the 40S ribosome. The eIF-3 complex specifically targets and initiates translation of a subset of mRNAs involved in cell proliferation. This is Eukaryotic translation initiation factor 3 subunit C (nip1) from Aspergillus clavatus (strain ATCC 1007 / CBS 513.65 / DSM 816 / NCTC 3887 / NRRL 1 / QM 1276 / 107).